We begin with the raw amino-acid sequence, 255 residues long: Probable transcriptional regulatory protein Rcas_0718 (255 aa).

This sequence belongs to the TACO1 family.

Its subcellular location is the cytoplasm. The chain is Probable transcriptional regulatory protein Rcas_0718 from Roseiflexus castenholzii (strain DSM 13941 / HLO8).